A 540-amino-acid polypeptide reads, in one-letter code: V-set and immunoglobulin domain-containing protein 10 (540 aa).

Residues methionine 1–alanine 30 form the signal peptide. Ig-like C2-type domains lie at valine 31–valine 119, proline 123–threonine 215, proline 223–arginine 309, and proline 311–serine 404. The Extracellular segment spans residues valine 31 to glycine 413. 8 N-linked (GlcNAc...) asparagine glycosylation sites follow: asparagine 39, asparagine 46, asparagine 70, asparagine 108, asparagine 138, asparagine 171, asparagine 180, and asparagine 198. The cysteines at positions 44 and 103 are disulfide-linked. 2 disulfide bridges follow: cysteine 153-cysteine 201 and cysteine 245-cysteine 290. N-linked (GlcNAc...) asparagine glycosylation occurs at asparagine 326. Cysteines 331 and 388 form a disulfide. A helical membrane pass occupies residues isoleucine 414–leucine 434. Topologically, residues histidine 435 to valine 540 are cytoplasmic. Residues aspartate 461 to alanine 477 are compositionally biased toward acidic residues. Disordered stretches follow at residues aspartate 461–isoleucine 500 and glutamine 513–valine 540. Residues glutamate 482–isoleucine 500 show a composition bias toward basic and acidic residues. A compositionally biased stretch (acidic residues) spans leucine 521–glutamine 534.

The protein localises to the membrane. The protein is V-set and immunoglobulin domain-containing protein 10 (VSIG10) of Homo sapiens (Human).